We begin with the raw amino-acid sequence, 430 residues long: Acetyl-CoA acetyltransferase FG05087, mitochondrial (430 aa).

The transit peptide at M1 to R32 directs the protein to the mitochondrion. C122 serves as the catalytic Acyl-thioester intermediate. Position 217 (Y217) interacts with K(+). K260 provides a ligand contact to CoA. A278 is a K(+) binding site. A CoA-binding site is contributed by S282. Residues H385 and C413 each act as proton acceptor in the active site. A chloride-binding site is contributed by N414.

This sequence belongs to the thiolase-like superfamily. Thiolase family. In terms of assembly, homotetramer. It depends on K(+) as a cofactor.

The protein resides in the mitochondrion. It catalyses the reaction 2 acetyl-CoA = acetoacetyl-CoA + CoA. In terms of biological role, mitochondrial acetyl-CoA acetyltransferase that catalyzes both the formation and degradation of acetoacetyl-CoA. Seems not to be involved in ergosterol biosynthesis. Plays an important role in growth, morphogenesis and maintaining mitochondrial function including the response to oxidative stresses. The sequence is that of Acetyl-CoA acetyltransferase FG05087, mitochondrial from Gibberella zeae (strain ATCC MYA-4620 / CBS 123657 / FGSC 9075 / NRRL 31084 / PH-1) (Wheat head blight fungus).